Consider the following 252-residue polypeptide: 3-dehydroquinate dehydratase (252 aa).

3-dehydroquinate is bound by residues S21, 46–48 (EWR), and R82. H143 acts as the Proton donor/acceptor in catalysis. The Schiff-base intermediate with substrate role is filled by K170. Residues R213, S232, and Q236 each coordinate 3-dehydroquinate.

The protein belongs to the type-I 3-dehydroquinase family. In terms of assembly, homodimer.

It catalyses the reaction 3-dehydroquinate = 3-dehydroshikimate + H2O. It functions in the pathway metabolic intermediate biosynthesis; chorismate biosynthesis; chorismate from D-erythrose 4-phosphate and phosphoenolpyruvate: step 3/7. In terms of biological role, involved in the third step of the chorismate pathway, which leads to the biosynthesis of aromatic amino acids. Catalyzes the cis-dehydration of 3-dehydroquinate (DHQ) and introduces the first double bond of the aromatic ring to yield 3-dehydroshikimate. The polypeptide is 3-dehydroquinate dehydratase (Shigella dysenteriae serotype 1 (strain Sd197)).